Consider the following 269-residue polypeptide: Phosphate import ATP-binding protein PstB (269 aa).

The ABC transporter domain maps to 21–264; it reads SEVRNLSFYY…PKNKQTEDYI (244 aa). An ATP-binding site is contributed by 53–60; sequence GPSGCGKS.

Belongs to the ABC transporter superfamily. Phosphate importer (TC 3.A.1.7) family. The complex is composed of two ATP-binding proteins (PstB), two transmembrane proteins (PstC and PstA) and a solute-binding protein (PstS).

The protein localises to the cell inner membrane. It catalyses the reaction phosphate(out) + ATP + H2O = ADP + 2 phosphate(in) + H(+). Part of the ABC transporter complex PstSACB involved in phosphate import. Responsible for energy coupling to the transport system. In Nitrosospira multiformis (strain ATCC 25196 / NCIMB 11849 / C 71), this protein is Phosphate import ATP-binding protein PstB.